Consider the following 316-residue polypeptide: Methionyl-tRNA formyltransferase (316 aa).

109–112 (SALP) is a binding site for (6S)-5,6,7,8-tetrahydrofolate.

This sequence belongs to the Fmt family.

The enzyme catalyses L-methionyl-tRNA(fMet) + (6R)-10-formyltetrahydrofolate = N-formyl-L-methionyl-tRNA(fMet) + (6S)-5,6,7,8-tetrahydrofolate + H(+). Attaches a formyl group to the free amino group of methionyl-tRNA(fMet). The formyl group appears to play a dual role in the initiator identity of N-formylmethionyl-tRNA by promoting its recognition by IF2 and preventing the misappropriation of this tRNA by the elongation apparatus. This Nocardioides sp. (strain ATCC BAA-499 / JS614) protein is Methionyl-tRNA formyltransferase.